Reading from the N-terminus, the 350-residue chain is 2-oxoglutarate and iron-dependent oxygenase domain-containing protein 2 (350 aa).

In terms of domain architecture, Fe2OG dioxygenase spans 215 to 309 (DSHRAFVVKY…RWNLVVWLRA (95 aa)). Positions 235, 237, and 290 each coordinate Fe cation. Residue R300 coordinates 2-oxoglutarate.

It belongs to the OGFOD2 family. Requires Fe(2+) as cofactor. L-ascorbate is required as a cofactor.

This Homo sapiens (Human) protein is 2-oxoglutarate and iron-dependent oxygenase domain-containing protein 2 (OGFOD2).